Consider the following 509-residue polypeptide: Histidine ammonia-lyase (509 aa).

Residues 142 to 144 (ASG) constitute a cross-link (5-imidazolinone (Ala-Gly)). S143 carries the post-translational modification 2,3-didehydroalanine (Ser).

This sequence belongs to the PAL/histidase family. In terms of processing, contains an active site 4-methylidene-imidazol-5-one (MIO), which is formed autocatalytically by cyclization and dehydration of residues Ala-Ser-Gly.

Its subcellular location is the cytoplasm. The enzyme catalyses L-histidine = trans-urocanate + NH4(+). The protein operates within amino-acid degradation; L-histidine degradation into L-glutamate; N-formimidoyl-L-glutamate from L-histidine: step 1/3. In Sphingopyxis alaskensis (strain DSM 13593 / LMG 18877 / RB2256) (Sphingomonas alaskensis), this protein is Histidine ammonia-lyase.